Here is a 189-residue protein sequence, read N- to C-terminus: Interferon alpha-12 (189 aa).

Residues 1-23 (MARLCAFLMTLLVMSYWSTCSLG) form the signal peptide. Disulfide bonds link cysteine 24–cysteine 122 and cysteine 52–cysteine 162. Residue asparagine 101 is glycosylated (N-linked (GlcNAc...) asparagine).

It belongs to the alpha/beta interferon family.

It localises to the secreted. In terms of biological role, produced by macrophages, IFN-alpha have antiviral activities. Interferon stimulates the production of two enzymes: a protein kinase and an oligoadenylate synthetase. The chain is Interferon alpha-12 (Ifna12) from Mus musculus (Mouse).